We begin with the raw amino-acid sequence, 2005 residues long: Sodium channel protein type 2 subunit alpha (2005 aa).

The Cytoplasmic segment spans residues 1–129; sequence MAQSVLVPPG…KLAIKILVHS (129 aa). Ser4 bears the Phosphoserine mark. Residues 28–61 are disordered; the sequence is RIAEEKAKRPKQERKDEDDENGPKPNSDLEAGKS. A Glycyl lysine isopeptide (Lys-Gly) (interchain with G-Cter in SUMO1) cross-link involves residue Lys38. One copy of the I repeat lies at 111 to 456; the sequence is ILTPFNPIRK…QQMLEQLKKQ (346 aa). Residues 130–148 traverse the membrane as a helical segment; sequence LFNMLIMCTILTNCVFMTM. Residues 149–155 are Extracellular-facing; it reads SNPPDWT. A helical transmembrane segment spans residues 156–176; the sequence is KNVEYTFTGIYTFESLIKILA. Residues 177-190 lie on the Cytoplasmic side of the membrane; the sequence is RGFCLEDFTFLRDP. The chain crosses the membrane as a helical span at residues 191–208; it reads WNWLDFTVITFAYVTEFV. The Extracellular portion of the chain corresponds to 209-214; it reads DLGNVS. An N-linked (GlcNAc...) asparagine glycan is attached at Asn212. A helical membrane pass occupies residues 215–231; sequence ALRTFRVLRALKTISVI. Residues 232–250 are Cytoplasmic-facing; the sequence is PGLKTIVGALIQSVKKLSD. A helical transmembrane segment spans residues 251 to 270; sequence VMILTVFCLSVFALIGLQLF. The Extracellular portion of the chain corresponds to 271–369; the sequence is MGNLRNKCLQ…PNYGYTSFDT (99 aa). Cysteines 278 and 338 form a disulfide. 6 N-linked (GlcNAc...) asparagine glycosylation sites follow: Asn285, Asn291, Asn297, Asn303, Asn308, and Asn340. The pore-forming intramembrane region spans 370–394; that stretch reads FSWAFLSLFRLMTQDFWENLYQLTL. Residues 395–401 lie on the Extracellular side of the membrane; sequence RAAGKTY. The helical transmembrane segment at 402–422 threads the bilayer; sequence MIFFVLVIFLGSFYLINLILA. Residues 423–759 are Cytoplasmic-facing; that stretch reads VVAMAYEEQN…HLVNLVVMDP (337 aa). Phosphoserine occurs at positions 468, 471, 484, 526, 528, 531, 553, 554, 558, 573, 576, 589, 610, 623, 686, 687, and 721. The tract at residues 494–529 is disordered; it reads SSKSEKELKNRRKKKKQKEQSGEEEKNDRVRKSESE. Positions 511-529 are enriched in basic and acidic residues; that stretch reads KEQSGEEEKNDRVRKSESE. Positions 590 to 610 are disordered; it reads ENDFADDEHSTFEDNDSRRDS. Basic and acidic residues predominate over residues 596 to 610; sequence DEHSTFEDNDSRRDS. An II repeat occupies 741–1013; the sequence is CCKPWLKVKH…QIAVGRMQKG (273 aa). Residues 760–778 form a helical membrane-spanning segment; that stretch reads FVDLAITICIVLNTLFMAM. At 779 to 789 the chain is on the extracellular side; that stretch reads EHYPMTEQFSS. The chain crosses the membrane as a helical span at residues 790–809; it reads VLSVGNLVFTGIFTAEMFLK. Topologically, residues 810–823 are cytoplasmic; it reads IIAMDPYYYFQEGW. A helical membrane pass occupies residues 824-843; the sequence is NIFDGFIVSLSLMELGLANV. Over 844–845 the chain is Extracellular; the sequence is EG. The helical transmembrane segment at 846–863 threads the bilayer; the sequence is LSVLRSFRLLRVFKLAKS. Residues 864-879 lie on the Cytoplasmic side of the membrane; the sequence is WPTLNMLIKIIGNSVG. A helical transmembrane segment spans residues 880–898; the sequence is ALGNLTLVLAIIVFIFAVV. The Extracellular segment spans residues 899–927; the sequence is GMQLFGKSYKECVCKISNDCELPRWHMHD. A disulfide bond links Cys912 and Cys918. Residues 917–918 form a binds SCN2B region; it reads DC. The pore-forming intramembrane region spans 928–948; the sequence is FFHSFLIVFRVLCGEWIETMW. The Extracellular portion of the chain corresponds to 949-961; that stretch reads DCMEVAGQTMCLT. A disulfide bridge links Cys950 with Cys959. Residues 962–982 traverse the membrane as a helical segment; the sequence is VFMMVMVIGNLVVLNLFLALL. Over 983–1209 the chain is Cytoplasmic; the sequence is LSSFSSDNLA…TCYKIVEHNW (227 aa). Residues 1120–1165 are disordered; it reads EEFSSESDMEESKEKLNATSSSEGSTVDIGAPAEGEQPEVEPEESL. Residues 1155-1165 show a composition bias toward acidic residues; it reads EQPEVEPEESL. The III repeat unit spans residues 1190-1504; the sequence is KGKLWWNLRK…KKYYNAMKKL (315 aa). Residues 1210–1227 form a helical membrane-spanning segment; sequence FETFIVFMILLSSGALAF. Topologically, residues 1228 to 1240 are extracellular; it reads EDIYIEQRKTIKT. The helical transmembrane segment at 1241-1259 threads the bilayer; that stretch reads MLEYADKVFTYIFILEMLL. At 1260–1273 the chain is on the cytoplasmic side; it reads KWVAYGFQVYFTNA. Residues 1274–1292 form a helical membrane-spanning segment; the sequence is WCWLDFLIVDVSLVSLTAN. Residues 1293–1300 lie on the Extracellular side of the membrane; sequence ALGYSELG. A helical transmembrane segment spans residues 1301-1319; it reads AIKSLRTLRALRPLRALSR. The Cytoplasmic portion of the chain corresponds to 1320 to 1336; that stretch reads FEGMRVVVNALLGAIPS. A helical transmembrane segment spans residues 1337 to 1356; it reads IMNVLLVCLIFWLIFSIMGV. Over 1357–1408 the chain is Extracellular; sequence NLFAGKFYHCINYTTGEMFDVSVVNNYSECKALIESNQTARWKNVKVNFDNV. Residues Cys1366 and Cys1386 are joined by a disulfide bond. N-linked (GlcNAc...) asparagine glycans are attached at residues Asn1368, Asn1382, and Asn1393. The segment at residues 1409 to 1430 is an intramembrane region (pore-forming); sequence GLGYLSLLQVATFKGWMDIMYA. Residues 1431–1447 lie on the Extracellular side of the membrane; sequence AVDSRNVELQPKYEDNL. Residues 1448-1469 traverse the membrane as a helical segment; sequence YMYLYFVIFIIFGSFFTLNLFI. Over 1470 to 1532 the chain is Cytoplasmic; sequence GVIIDNFNQQ…MVFDFVTKQV (63 aa). Position 1506 is a phosphoserine; by PKC (Ser1506). The IV repeat unit spans residues 1513–1811; that stretch reads IPRPANKFQG…WEKFDPDATQ (299 aa). A helical membrane pass occupies residues 1533–1550; the sequence is FDISIMILICLNMVTMMV. The Extracellular portion of the chain corresponds to 1551–1561; sequence ETDDQSQEMTN. A helical transmembrane segment spans residues 1562–1580; the sequence is ILYWINLVFIVLFTGECVL. Over 1581 to 1592 the chain is Cytoplasmic; it reads KLISLRYYYFTI. The chain crosses the membrane as a helical span at residues 1593–1610; the sequence is GWNIFDFVVVILSIVGMF. Topologically, residues 1611–1623 are extracellular; that stretch reads LAELIEKYFVSPT. The chain crosses the membrane as a helical span at residues 1624–1640; the sequence is LFRVIRLARIGRILRLI. Topologically, residues 1641-1659 are cytoplasmic; that stretch reads KGAKGIRTLLFALMMSLPA. A helical transmembrane segment spans residues 1660–1677; it reads LFNIGLLLFLVMFIYAIF. The Extracellular portion of the chain corresponds to 1678-1699; sequence GMSNFAYVKREVGIDDMFNFET. Residues 1700–1722 constitute an intramembrane region (pore-forming); sequence FGNSMICLFQITTSAGWDGLLAP. At 1723–1752 the chain is on the extracellular side; sequence ILNSGPPDCDPDKDHPGSSVKGDCGNPSVG. A disulfide bond links Cys1731 and Cys1746. Residues 1753-1775 form a helical membrane-spanning segment; it reads IFFFVSYIIISFLVVVNMYIAVI. The Cytoplasmic portion of the chain corresponds to 1776 to 2005; the sequence is LENFSVATEE…KGKDIRESKK (230 aa). Residues 1905 to 1934 form the IQ domain; it reads EEVSAIIIQRAYRRYLLKQKVKKVSSIYKK. Ser1930 is subject to Phosphoserine. A compositionally biased stretch (basic and acidic residues) spans 1935 to 1964; that stretch reads DKGKECDGTPIKEDTLIDKLNENSTPEKTD. The disordered stretch occupies residues 1935–2005; the sequence is DKGKECDGTP…KGKDIRESKK (71 aa). A phosphothreonine mark is found at Thr1943, Thr1963, and Thr1966. Ser1971 is subject to Phosphoserine. Positions 1979-2005 are enriched in basic and acidic residues; it reads TKPEKEKFEKDKSEKEDKGKDIRESKK.

The protein belongs to the sodium channel (TC 1.A.1.10) family. Nav1.2/SCN2A subfamily. Heterooligomer of a large alpha subunit and a smaller beta subunit. Heterooligomer with SCN2B or SCN4B; disulfide-linked. Heterooligomer with SCN1B or SCN3B; non-covalently linked. Interacts with NEDD4L. Interacts with CALM. Interacts with TMEM233. Interacts with the conotoxin GVIIJ. Interacts with the spider beta/delta-theraphotoxin-Pre1a. Interacts with the conotoxin KIIIA. Interacts with the spider protoxin-II. Post-translationally, may be ubiquitinated by NEDD4L; which would promote its endocytosis. Phosphorylation at Ser-1506 by PKC in a highly conserved cytoplasmic loop slows inactivation of the sodium channel and reduces peak sodium currents. In terms of processing, sumoylated at Lys-38. Sumoylation is induced by hypoxia, increases voltage-gated sodium current and mediates the early response to acute hypoxia in neurons. Sumoylated SCN2A is located at the cell membrane.

It is found in the cell membrane. The catalysed reaction is Na(+)(in) = Na(+)(out). Its function is as follows. Mediates the voltage-dependent sodium ion permeability of excitable membranes. Assuming opened or closed conformations in response to the voltage difference across the membrane, the protein forms a sodium-selective channel through which Na(+) ions may pass in accordance with their electrochemical gradient. Implicated in the regulation of hippocampal replay occurring within sharp wave ripples (SPW-R) important for memory. This chain is Sodium channel protein type 2 subunit alpha, found in Homo sapiens (Human).